The following is a 293-amino-acid chain: NAD kinase (293 aa).

The active-site Proton acceptor is the aspartate 74. Residues 74–75, arginine 79, 148–149, arginine 176, aspartate 178, 189–194, and glutamine 248 contribute to the NAD(+) site; these read DG, NE, and TAYALS.

This sequence belongs to the NAD kinase family. Requires a divalent metal cation as cofactor.

The protein resides in the cytoplasm. The catalysed reaction is NAD(+) + ATP = ADP + NADP(+) + H(+). Functionally, involved in the regulation of the intracellular balance of NAD and NADP, and is a key enzyme in the biosynthesis of NADP. Catalyzes specifically the phosphorylation on 2'-hydroxyl of the adenosine moiety of NAD to yield NADP. The chain is NAD kinase from Blochmanniella floridana.